The following is a 712-amino-acid chain: NURS complex subunit red1 (712 aa).

Residues 1–22 show a composition bias toward basic and acidic residues; sequence MSRSINLDELRKKALESKKKNE. 3 disordered regions span residues 1–71, 107–195, and 323–348; these read MSRS…DRFP, NKTF…TTNQ, and DDFSNSKIEQSNLEKPPSNSENGLTM. A coiled-coil region spans residues 5-32; it reads INLDELRKKALESKKKNEEDESNDSDKE. Residues 23-42 are compositionally biased toward acidic residues; that stretch reads EDESNDSDKEDGEISEDDPV. The span at 130–141 shows a compositional bias: low complexity; sequence SETSDSSNTSQS. Polar residues-rich tracts occupy residues 178–193 and 327–348; these read FLSTSKNSDANYSKTT and NSKIEQSNLEKPPSNSENGLTM. Positions 351-379 form a coiled coil; the sequence is SDYLALLRNKEEEIRRMTKLILRLESNKK. The disordered stretch occupies residues 428–447; it reads PSISSSGASSSAATTNSDTT. A coiled-coil region spans residues 471-501; the sequence is AQIKKSEIDILNNLIEKEEGELTKYQTLVKS. Residues 545-567 show a composition bias toward polar residues; sequence QADENSSQILSSKTSNAPNGTTE. The segment at 545-568 is disordered; that stretch reads QADENSSQILSSKTSNAPNGTTET. The C3H1-type zinc-finger motif lies at 618–639; it reads FCKYETTGGVCNDDHCEASHFR.

Interacts with mmi1, pla1 and rrp6.

It localises to the nucleus. Promotes the exosome-mediated degradation of mRNAs containing a DSR (determinant of selective removal) signal sequence from mitotic cells. The chain is NURS complex subunit red1 from Schizosaccharomyces pombe (strain 972 / ATCC 24843) (Fission yeast).